The chain runs to 437 residues: GTPase Obg (437 aa).

Positions 2 to 160 (SMFLDTAKIS…RELQLELKIL (159 aa)) constitute an Obg domain. A disordered region spans residues 127–146 (GNIRFATPRNPAPEIAENGE). Residues 161 to 338 (ADVGLVGFPS…LLEATAELLD (178 aa)) enclose the OBG-type G domain. Residues 167–174 (GFPSVGKS), 192–196 (FTTIV), 214–217 (DLPG), 284–287 (NKMD), and 319–321 (SSL) contribute to the GTP site. Ser-174 and Thr-194 together coordinate Mg(2+). The OCT domain occupies 359–437 (GFNEEERPFE…IGNFEFEFVD (79 aa)).

This sequence belongs to the TRAFAC class OBG-HflX-like GTPase superfamily. OBG GTPase family. In terms of assembly, monomer. Mg(2+) is required as a cofactor.

The protein resides in the cytoplasm. An essential GTPase which binds GTP, GDP and possibly (p)ppGpp with moderate affinity, with high nucleotide exchange rates and a fairly low GTP hydrolysis rate. Plays a role in control of the cell cycle, stress response, ribosome biogenesis and in those bacteria that undergo differentiation, in morphogenesis control. In Streptococcus thermophilus (strain ATCC BAA-491 / LMD-9), this protein is GTPase Obg.